A 365-amino-acid polypeptide reads, in one-letter code: 3-dehydroquinate synthase (365 aa).

NAD(+)-binding positions include 107–111 (GVIGD), 131–132 (TT), K144, and K153. Zn(2+)-binding residues include E186, H251, and H268.

It belongs to the sugar phosphate cyclases superfamily. Dehydroquinate synthase family. It depends on Co(2+) as a cofactor. Requires Zn(2+) as cofactor. NAD(+) serves as cofactor.

It localises to the cytoplasm. It carries out the reaction 7-phospho-2-dehydro-3-deoxy-D-arabino-heptonate = 3-dehydroquinate + phosphate. The protein operates within metabolic intermediate biosynthesis; chorismate biosynthesis; chorismate from D-erythrose 4-phosphate and phosphoenolpyruvate: step 2/7. Catalyzes the conversion of 3-deoxy-D-arabino-heptulosonate 7-phosphate (DAHP) to dehydroquinate (DHQ). The sequence is that of 3-dehydroquinate synthase from Picosynechococcus sp. (strain ATCC 27264 / PCC 7002 / PR-6) (Agmenellum quadruplicatum).